The sequence spans 309 residues: Aspartate carbamoyltransferase catalytic subunit (309 aa).

The carbamoyl phosphate site is built by Arg-55 and Thr-56. Lys-85 is a binding site for L-aspartate. Carbamoyl phosphate is bound by residues Arg-106, His-135, and Gln-138. Arg-168 and Arg-230 together coordinate L-aspartate. The carbamoyl phosphate site is built by Leu-268 and Pro-269.

Belongs to the aspartate/ornithine carbamoyltransferase superfamily. ATCase family. Heterododecamer (2C3:3R2) of six catalytic PyrB chains organized as two trimers (C3), and six regulatory PyrI chains organized as three dimers (R2).

It carries out the reaction carbamoyl phosphate + L-aspartate = N-carbamoyl-L-aspartate + phosphate + H(+). It functions in the pathway pyrimidine metabolism; UMP biosynthesis via de novo pathway; (S)-dihydroorotate from bicarbonate: step 2/3. Functionally, catalyzes the condensation of carbamoyl phosphate and aspartate to form carbamoyl aspartate and inorganic phosphate, the committed step in the de novo pyrimidine nucleotide biosynthesis pathway. The chain is Aspartate carbamoyltransferase catalytic subunit from Wigglesworthia glossinidia brevipalpis.